A 554-amino-acid chain; its full sequence is Glucose-6-phosphate isomerase (554 aa).

E358 functions as the Proton donor in the catalytic mechanism. Residues H389 and K515 contribute to the active site. The segment covering 527-540 (ADNSPAPQSDSSTD) has biased composition (polar residues). Residues 527-554 (ADNSPAPQSDSSTDALVRRYRSERGRTS) are disordered. A compositionally biased stretch (basic and acidic residues) spans 542 to 554 (LVRRYRSERGRTS).

Belongs to the GPI family.

The protein localises to the cytoplasm. It carries out the reaction alpha-D-glucose 6-phosphate = beta-D-fructose 6-phosphate. It participates in carbohydrate biosynthesis; gluconeogenesis. Its pathway is carbohydrate degradation; glycolysis; D-glyceraldehyde 3-phosphate and glycerone phosphate from D-glucose: step 2/4. Its function is as follows. Catalyzes the reversible isomerization of glucose-6-phosphate to fructose-6-phosphate. This chain is Glucose-6-phosphate isomerase, found in Mycobacterium avium (strain 104).